The primary structure comprises 344 residues: Type VI secretion system component TssA1 (344 aa).

As to quaternary structure, homododecamer. Interacts with TssB1 and TssC1. Interacts with TssK1 and TssF1.

Functionally, core component of the H1 type VI (H1-T6SS) secretion system that plays a role in the release of toxins targeting both eukaryotic and prokaryotic species. Forms a dodecameric ring-shaped structure located at one end of the T6SS sheath. May properly attach the pre-assembled sheath onto the baseplate and/or stabilize the sheaths tubular structure. This Pseudomonas aeruginosa (strain ATCC 15692 / DSM 22644 / CIP 104116 / JCM 14847 / LMG 12228 / 1C / PRS 101 / PAO1) protein is Type VI secretion system component TssA1.